Here is a 378-residue protein sequence, read N- to C-terminus: Secreted LysM effector ldpA (378 aa).

Positions 1–19 (MMKSIRFLASALALCLVDA) are cleaved as a signal peptide. Low complexity predominate over residues 118–131 (WTPPTTTTRSTSSS). Positions 118–139 (WTPPTTTTRSTSSSAGNGVTTP) are disordered. The 47-residue stretch at 152–198 (RFYLVVSGDSCYDIAAAQGISLDNFYTWNPAVGSSCGGLWPDYYVCV) folds into the LysM 1 domain. The interval 208–230 (TTTTTTTPTTTSTTTTTAGNGVT) is disordered. LysM domains follow at residues 245 to 291 (KFYQ…YVCV) and 330 to 376 (KFYL…YVCV).

It belongs to the secreted LysM effector family.

Its subcellular location is the secreted. It localises to the cell wall. It is found in the extracellular space. The protein resides in the extracellular matrix. Its function is as follows. Cell wall chitin of A.fumigatus recruits lung eosinophils during infection and ldpA might have a role in sequestration of chitin and act as triggers of host immunity to dampen host defense. The chain is Secreted LysM effector ldpA from Aspergillus fumigatus (strain ATCC MYA-4609 / CBS 101355 / FGSC A1100 / Af293) (Neosartorya fumigata).